The chain runs to 359 residues: Phosphate acyltransferase (359 aa).

The protein belongs to the PlsX family. In terms of assembly, homodimer. Probably interacts with PlsY.

It is found in the cytoplasm. The catalysed reaction is a fatty acyl-[ACP] + phosphate = an acyl phosphate + holo-[ACP]. Its pathway is lipid metabolism; phospholipid metabolism. Catalyzes the reversible formation of acyl-phosphate (acyl-PO(4)) from acyl-[acyl-carrier-protein] (acyl-ACP). This enzyme utilizes acyl-ACP as fatty acyl donor, but not acyl-CoA. The polypeptide is Phosphate acyltransferase (Salmonella heidelberg (strain SL476)).